Here is a 488-residue protein sequence, read N- to C-terminus: Probable glycine dehydrogenase (decarboxylating) subunit 2 (488 aa).

The residue at position 274 (Lys274) is an N6-(pyridoxal phosphate)lysine.

The protein belongs to the GcvP family. C-terminal subunit subfamily. In terms of assembly, the glycine cleavage system is composed of four proteins: P, T, L and H. In this organism, the P 'protein' is a heterodimer of two subunits. Pyridoxal 5'-phosphate serves as cofactor.

The enzyme catalyses N(6)-[(R)-lipoyl]-L-lysyl-[glycine-cleavage complex H protein] + glycine + H(+) = N(6)-[(R)-S(8)-aminomethyldihydrolipoyl]-L-lysyl-[glycine-cleavage complex H protein] + CO2. The glycine cleavage system catalyzes the degradation of glycine. The P protein binds the alpha-amino group of glycine through its pyridoxal phosphate cofactor; CO(2) is released and the remaining methylamine moiety is then transferred to the lipoamide cofactor of the H protein. The protein is Probable glycine dehydrogenase (decarboxylating) subunit 2 of Listeria monocytogenes serotype 4a (strain HCC23).